The sequence spans 601 residues: NADH-ubiquinone oxidoreductase chain 5 (601 aa).

The next 15 helical transmembrane spans lie at 3–23 (LIMP…MMSY), 36–56 (VTSS…MFLL), 84–104 (FFSI…MEFS), 114–134 (INQF…LVTA), 140–160 (LFIG…WWYG), 171–191 (AILY…WLLL), 201–221 (IFML…AAAG), 240–260 (TPVS…FLLV), 272–292 (ILTM…ICAL), 324–346 (AFLH…GSII), 365–385 (MPFT…MPFL), 404–426 (NAWA…TRLI), 456–476 (LALG…PLIT), 483–503 (LYMK…AMGL), and 581–601 (LIKL…MLII).

Belongs to the complex I subunit 5 family.

It localises to the mitochondrion inner membrane. It catalyses the reaction a ubiquinone + NADH + 5 H(+)(in) = a ubiquinol + NAD(+) + 4 H(+)(out). In terms of biological role, core subunit of the mitochondrial membrane respiratory chain NADH dehydrogenase (Complex I) that is believed to belong to the minimal assembly required for catalysis. Complex I functions in the transfer of electrons from NADH to the respiratory chain. The immediate electron acceptor for the enzyme is believed to be ubiquinone. The chain is NADH-ubiquinone oxidoreductase chain 5 (MT-ND5) from Dasypus novemcinctus (Nine-banded armadillo).